The sequence spans 192 residues: Signal peptidase complex subunit 2 (192 aa).

Over 1–46 (MEEKKTESTNKNVKKANLLDHHSIKHILDESVSDIVTSRGYKEDVR) the chain is Cytoplasmic. Residues 47–69 (LSNLKLILGTIIIVVALVAQFYN) traverse the membrane as a helical segment. At 70–78 (KKFPENRDF) the chain is on the lumenal side. Residues 79–98 (LIGCIALYVVLNAVLQLILY) traverse the membrane as a helical segment. Residues 99–192 (TKEKNAILFT…YAEEEPKKKK (94 aa)) are Cytoplasmic-facing.

The protein belongs to the SPCS2 family. As to quaternary structure, component of the signal peptidase complex (SPC) composed of a catalytic subunit SEC11 and three accessory subunits SPCS1, SPCS2 and SPCS3. The complex induces a local thinning of the ER membrane which is used to measure the length of the signal peptide (SP) h-region of protein substrates. This ensures the selectivity of the complex towards h-regions shorter than 18-20 amino acids.

It is found in the endoplasmic reticulum membrane. Functionally, component of the signal peptidase complex (SPC) which catalyzes the cleavage of N-terminal signal sequences from nascent proteins as they are translocated into the lumen of the endoplasmic reticulum. Enhances the enzymatic activity of SPC and facilitates the interactions between different components of the translocation site. The polypeptide is Signal peptidase complex subunit 2 (Arabidopsis thaliana (Mouse-ear cress)).